We begin with the raw amino-acid sequence, 463 residues long: Adenosylhomocysteinase (463 aa).

The substrate site is built by threonine 54, aspartate 128, and glutamate 189. 190–192 (TTT) provides a ligand contact to NAD(+). Positions 219 and 223 each coordinate substrate. NAD(+) contacts are provided by residues asparagine 224, 253-258 (GYGDVG), glutamate 276, asparagine 311, 332-334 (IGH), and asparagine 377.

It belongs to the adenosylhomocysteinase family. As to quaternary structure, homotetramer. It depends on NAD(+) as a cofactor.

It localises to the cytoplasm. It carries out the reaction S-adenosyl-L-homocysteine + H2O = L-homocysteine + adenosine. The protein operates within amino-acid biosynthesis; L-homocysteine biosynthesis; L-homocysteine from S-adenosyl-L-homocysteine: step 1/1. In terms of biological role, may play a key role in the regulation of the intracellular concentration of adenosylhomocysteine. In Rhodobacter capsulatus (strain ATCC BAA-309 / NBRC 16581 / SB1003), this protein is Adenosylhomocysteinase.